Consider the following 299-residue polypeptide: ATP phosphoribosyltransferase (299 aa).

Belongs to the ATP phosphoribosyltransferase family. Long subfamily. As to quaternary structure, equilibrium between an active dimeric form, an inactive hexameric form and higher aggregates. Interconversion between the various forms is largely reversible and is influenced by the natural substrates and inhibitors of the enzyme. Mg(2+) serves as cofactor.

It localises to the cytoplasm. The enzyme catalyses 1-(5-phospho-beta-D-ribosyl)-ATP + diphosphate = 5-phospho-alpha-D-ribose 1-diphosphate + ATP. The protein operates within amino-acid biosynthesis; L-histidine biosynthesis; L-histidine from 5-phospho-alpha-D-ribose 1-diphosphate: step 1/9. Its activity is regulated as follows. Feedback inhibited by histidine. Its function is as follows. Catalyzes the condensation of ATP and 5-phosphoribose 1-diphosphate to form N'-(5'-phosphoribosyl)-ATP (PR-ATP). Has a crucial role in the pathway because the rate of histidine biosynthesis seems to be controlled primarily by regulation of HisG enzymatic activity. In Salmonella enteritidis PT4 (strain P125109), this protein is ATP phosphoribosyltransferase.